Consider the following 390-residue polypeptide: GTPase Obg (390 aa).

An Obg domain is found at 1–159 (MKFVDEATIK…RELRLELLLL (159 aa)). One can recognise an OBG-type G domain in the interval 160–333 (ADVGMLGLPN…LCDELADFMD (174 aa)). GTP-binding positions include 166–173 (GLPNAGKS), 191–195 (FTTLI), 213–216 (DIPG), 283–286 (NKTD), and 314–316 (AAV). Residues serine 173 and threonine 193 each contribute to the Mg(2+) site.

Belongs to the TRAFAC class OBG-HflX-like GTPase superfamily. OBG GTPase family. As to quaternary structure, monomer. Requires Mg(2+) as cofactor.

Its subcellular location is the cytoplasm. In terms of biological role, an essential GTPase which binds GTP, GDP and possibly (p)ppGpp with moderate affinity, with high nucleotide exchange rates and a fairly low GTP hydrolysis rate. Plays a role in control of the cell cycle, stress response, ribosome biogenesis and in those bacteria that undergo differentiation, in morphogenesis control. This chain is GTPase Obg, found in Aliivibrio fischeri (strain ATCC 700601 / ES114) (Vibrio fischeri).